The primary structure comprises 153 residues: Large ribosomal subunit protein uL15 (153 aa).

A disordered region spans residues 21–40; it reads RGIGSGKGKTGGRGIKGQKS. The span at 23–35 shows a compositional bias: gly residues; sequence IGSGKGKTGGRGI.

This sequence belongs to the universal ribosomal protein uL15 family. As to quaternary structure, part of the 50S ribosomal subunit.

In terms of biological role, binds to the 23S rRNA. This is Large ribosomal subunit protein uL15 from Rickettsia canadensis (strain McKiel).